Consider the following 369-residue polypeptide: MRSMNLVDLWAQQACLVFNQTLSYKSFNGFMKIPLKNSKINPKLNKKRPFSPLTVSAIATTKEDERIEAAQTEEPFNFKIYVTEKAISVNKALDEAIIVKEPHVIHEAMRYSLLAGGKRVRPMLCLAACELVGGNQENAMAAACAVEMIHTMSLIHDDLPCMDNDDLRRGKPTNHKIYGEDVAVLAGDSLLAFAFEHIVNSTAGVTPSRIVGAVAELAKSIGTEGLVAGQVADIKCTGNASVSLETLEFIHVHKTAALLESSVVLGAILGGGTNVEVEKLRRFARCIGLLFQVVDDILDVTKSSEELGKTAGKDLVVDKTTYPKLLGLEKAKEFAAELNREAKQQLEGFDSRKAAPLIALADYIAYRDN.

Lys-118, Arg-121, and His-150 together coordinate isopentenyl diphosphate. Positions 157 and 163 each coordinate Mg(2+). Residue Arg-168 participates in dimethylallyl diphosphate binding. Position 169 (Arg-169) interacts with isopentenyl diphosphate. Positions 254, 255, 292, 309, and 319 each coordinate dimethylallyl diphosphate.

This sequence belongs to the FPP/GGPP synthase family. As to quaternary structure, monomer. The cofactor is Mg(2+).

It localises to the plastid. The protein resides in the chloroplast. It catalyses the reaction isopentenyl diphosphate + dimethylallyl diphosphate = (2E)-geranyl diphosphate + diphosphate. The catalysed reaction is isopentenyl diphosphate + (2E)-geranyl diphosphate = (2E,6E)-farnesyl diphosphate + diphosphate. The enzyme catalyses isopentenyl diphosphate + (2E,6E)-farnesyl diphosphate = (2E,6E,10E)-geranylgeranyl diphosphate + diphosphate. It participates in isoprenoid biosynthesis; farnesyl diphosphate biosynthesis; farnesyl diphosphate from geranyl diphosphate and isopentenyl diphosphate: step 1/1. The protein operates within isoprenoid biosynthesis; geranyl diphosphate biosynthesis; geranyl diphosphate from dimethylallyl diphosphate and isopentenyl diphosphate: step 1/1. Its pathway is isoprenoid biosynthesis; geranylgeranyl diphosphate biosynthesis; geranylgeranyl diphosphate from farnesyl diphosphate and isopentenyl diphosphate: step 1/1. Catalyzes the trans-addition of the three molecules of IPP onto DMAPP to form geranylgeranyl pyrophosphate. This Capsicum annuum (Capsicum pepper) protein is Geranylgeranyl pyrophosphate synthase, chloroplastic.